The following is a 175-amino-acid chain: ADP-ribosylation factor 6 (175 aa).

Gly2 carries the N-myristoyl glycine lipid modification. Lys3 carries N6-myristoyl lysine lipidation. Residues 23–28, 41–44, 63–67, 122–125, and 155–156 contribute to the GTP site; these read AAGKTT, TIPT, DVGGQ, NKQD, and CA.

Belongs to the small GTPase superfamily. Arf family.

It is found in the cytoplasm. Its subcellular location is the cytosol. The protein localises to the cell membrane. It localises to the endosome membrane. The protein resides in the recycling endosome membrane. It is found in the cell projection. Its subcellular location is the filopodium membrane. The protein localises to the ruffle. It localises to the cleavage furrow. The protein resides in the midbody. It is found in the midbody ring. The enzyme catalyses GTP + H2O = GDP + phosphate + H(+). Functionally, GTP-binding protein involved in protein trafficking; regulates endocytic recycling and cytoskeleton remodeling. May modulate vesicle budding and uncoating within the Golgi apparatus. May contribute to the regulation of dendritic branching, filopodia extension and dendritic spine development. The chain is ADP-ribosylation factor 6 (ARF6) from Gallus gallus (Chicken).